Reading from the N-terminus, the 234-residue chain is MLTYETWEENNVSFSEEDETKGALSVLSWAYKEYEGEIVYACSFGVEGMVLLHLINQVNPSAKVVFLDTNVHFQETYELIQKVRERFPSLNIIEKQPKLTLDEQAKLHGNKLWESNPNLCCKIRKILPLEESLANEKAWISGLRREQSETRKHTKFINQDHRFQSIKVCPLIHWTWKEVWRYVYKHSLPYNPLHDIGYPSIGCEKCTLPVGEGGDSRDGRWAGKVKTECGLHYQ.

Residues cysteine 120, cysteine 121, cysteine 203, and cysteine 206 each coordinate [4Fe-4S] cluster. The active-site Nucleophile; cysteine thiosulfonate intermediate is cysteine 229.

Belongs to the PAPS reductase family. CysH subfamily. It depends on [4Fe-4S] cluster as a cofactor.

It localises to the cytoplasm. It catalyses the reaction [thioredoxin]-disulfide + sulfite + AMP + 2 H(+) = adenosine 5'-phosphosulfate + [thioredoxin]-dithiol. Its pathway is sulfur metabolism; hydrogen sulfide biosynthesis; sulfite from sulfate. Its function is as follows. Catalyzes the formation of sulfite from adenosine 5'-phosphosulfate (APS) using thioredoxin as an electron donor. The chain is Adenosine 5'-phosphosulfate reductase from Bacillus cereus (strain ZK / E33L).